Here is a 1082-residue protein sequence, read N- to C-terminus: MDASGKGAAGFEGKLFVQTIDARDENEEKYMRAYRAFEETTAGLSDKDFHDLLSSLVSKEKQHEEISLALVYIILTDPSSAPKTYRDLTLLTRDGLGFVTANLAMLVAEKYHKLTDVGRKQLLWLLRELIKNQVLNVDNLAWNILRQASGGDISPKNVALIEGLLDIFTEHRAWLEKDQFLVGTVAYTFVRLIEDHFGPQFVHLRNREVKFVISLIRDRFMDIIPLGREFVRLLQNVGRIPEFDQLWKDMLYNPKSLCPTFNGVWQLLQTRTSRRFLRGRLTPDIERKIHFLTSNVKFGNQKRYQDWFQERYFNTPESQSLRCDLIRFIISAIHPTNDMLCSDIIPRWAIIGWLLTSCTNAVTLANAKLALFYDWLFFDPAKDNIMNVEPGILVMYHSIKNHPLVSCTLLDFLCRIMKNFYPKWEDRIRTGIYNSLRKILEMKVIPNLVPLFESPKLDRELKGMLRETFREFCVPPNSMYMHPGPPQPGMETPMMMHYPGPGGGEQVEQHPPHLMHPAAKAASTAASADDPKFSDDEDDATTKPATTTTTTTTTTKTEDVSDDDDLPLAKVRLLEKPAIAKVALPDTLNGHLEEFLREKSVKTFEPLLQCLGSCGKAALNQEQENYLTESVISVIKQTLPDKSYFPASKTDDNLSESINYPLFAAYRLLYQQEDSCKKRVMALLVAIVTRVSVAGYMLLYFLKVHGKLQGRRKETAGGSTAFKASVYGVLCDALDSVDSVDECIEKDLNLLEKHNTQMFLWILPDMYREFKQTMLNNTTVLRLLVGCIDANNLGDIIYSITQGKLILFDEDGIVEILRKSLEYETFEQVCIWQLVQAHDIPLETFQEIIPELESGAHAEALTAILLLLRAEKPTTELVRLLLSRETESKHRGDPFVTSVLRYWCQEFEEKLSELIAALLTSKYPSNSPNKRKRPSKSAQQNTAPTSEQLLNHLEHFRRSCRHGNGTGTGLFVQNDMQRALQQAFTHSSESQRKQFSDLFALAAEDETSTTVGRRGTSSRGRKAPSNKKETAAEKAAAAAAAAHANNSKKAAEASAKFSDDSSDEDWSKQKASKRRKTLSDSD.

Disordered stretches follow at residues 483–563 (PGPP…VSDD), 923–945 (YPSNSPNKRKRPSKSAQQNTAPT), and 1005–1082 (DETS…SDSD). Low complexity-rich tracts occupy residues 517–528 (PAAKAASTAASA) and 542–555 (TKPATTTTTTTTTT). The segment covering 936-945 (KSAQQNTAPT) has biased composition (polar residues). 2 stretches are compositionally biased toward low complexity: residues 1008–1018 (STTVGRRGTSS) and 1033–1056 (EKAAAAAAAAHANNSKKAAEASAK).

The protein belongs to the Integrator subunit 3 family. As to quaternary structure, belongs to the multiprotein complex Integrator. The core complex associates with protein phosphatase 2A subunits, to form the Integrator-PP2A (INTAC) complex.

Its subcellular location is the nucleus. The protein resides in the cytoplasm. Functionally, component of the integrator complex, a multiprotein complex that terminates RNA polymerase II (Pol II) transcription in the promoter-proximal region of genes. The integrator complex provides a quality checkpoint during transcription elongation by driving premature transcription termination of transcripts that are unfavorably configured for transcriptional elongation: the complex terminates transcription by (1) catalyzing dephosphorylation of the C-terminal domain (CTD) of Pol II subunit Polr2A/Rbp1 and Spt5, and (2) degrading the exiting nascent RNA transcript via endonuclease activity. The integrator complex is also involved in the 3'-end processing of the U7 snRNA, and also the spliceosomal snRNAs U1, U2, U4 and U5. The polypeptide is Integrator complex subunit 3 homolog (Anopheles gambiae (African malaria mosquito)).